A 99-amino-acid chain; its full sequence is Putative membrane protein insertion efficiency factor (99 aa).

Belongs to the UPF0161 family.

It localises to the cell membrane. Functionally, could be involved in insertion of integral membrane proteins into the membrane. This chain is Putative membrane protein insertion efficiency factor, found in Levilactobacillus brevis (strain ATCC 367 / BCRC 12310 / CIP 105137 / JCM 1170 / LMG 11437 / NCIMB 947 / NCTC 947) (Lactobacillus brevis).